A 329-amino-acid polypeptide reads, in one-letter code: Pantothenate kinase (329 aa).

107–114 (GSVAVGKS) provides a ligand contact to ATP.

It belongs to the prokaryotic pantothenate kinase family.

The protein resides in the cytoplasm. It catalyses the reaction (R)-pantothenate + ATP = (R)-4'-phosphopantothenate + ADP + H(+). Its pathway is cofactor biosynthesis; coenzyme A biosynthesis; CoA from (R)-pantothenate: step 1/5. The polypeptide is Pantothenate kinase (Streptomyces avermitilis (strain ATCC 31267 / DSM 46492 / JCM 5070 / NBRC 14893 / NCIMB 12804 / NRRL 8165 / MA-4680)).